We begin with the raw amino-acid sequence, 339 residues long: uncharacterized protein (339 aa).

The interval 1–24 (IQPARRHTKNTNMAKHTTKGTGHS) is disordered. Residues 10–21 (NTNMAKHTTKGT) show a composition bias toward polar residues.

It localises to the mitochondrion. This is an uncharacterized protein from Zea mays (Maize).